The following is an 867-amino-acid chain: Inactive tyrosine-protein kinase kin-32 (867 aa).

One can recognise an FERM domain in the interval 3-327; it reads GLARVFLIGG…GYQMLYNQRD (325 aa). The 265-residue stretch at 367 to 631 folds into the Protein kinase domain; sequence ITLKELIGGG…IIEDVRQQII (265 aa). Residues 373–381 and lysine 400 each bind ATP; that span reads IGGGQFGNV. Residues 662 to 691 adopt a coiled-coil conformation; the sequence is TLYRTMEDQKRQAEEDAKWLEQEDDEDEDD. The disordered stretch occupies residues 674–729; it reads AEEDAKWLEQEDDEDEDDQDIDQIPSTSHSSVENIRTSNGYLHHTPTSTRSLRFED. Residues 683-694 show a composition bias toward acidic residues; the sequence is QEDDEDEDDQDI. Residues 698–724 are compositionally biased toward polar residues; sequence PSTSHSSVENIRTSNGYLHHTPTSTRS.

The protein belongs to the protein kinase superfamily. Tyr protein kinase family. FAK subfamily. As to expression, expressed in body wall muscles and some neurons in the head.

In terms of biological role, has apparently no tyrosine kinase activity in vitro when expressed in mammalian cells. This chain is Inactive tyrosine-protein kinase kin-32, found in Caenorhabditis elegans.